Consider the following 234-residue polypeptide: Triosephosphate isomerase (234 aa).

8–10 contacts substrate; that stretch reads NFK. The active-site Electrophile is histidine 90. Glutamate 159 serves as the catalytic Proton acceptor. Substrate is bound by residues glycine 165 and serine 197.

It belongs to the triosephosphate isomerase family. Homodimer.

It is found in the cytoplasm. The enzyme catalyses D-glyceraldehyde 3-phosphate = dihydroxyacetone phosphate. It functions in the pathway carbohydrate biosynthesis; gluconeogenesis. The protein operates within carbohydrate degradation; glycolysis; D-glyceraldehyde 3-phosphate from glycerone phosphate: step 1/1. Involved in the gluconeogenesis. Catalyzes stereospecifically the conversion of dihydroxyacetone phosphate (DHAP) to D-glyceraldehyde-3-phosphate (G3P). The polypeptide is Triosephosphate isomerase (Helicobacter acinonychis (strain Sheeba)).